The following is a 121-amino-acid chain: uncharacterized protein (121 aa).

The N-terminal stretch at 1–23 is a signal peptide; sequence MNFSTVFQAIIAVLGLTTVTALA. Asn68 and Asn84 each carry an N-linked (GlcNAc...) asparagine glycan.

Post-translationally, N-glycosylated.

This is an uncharacterized protein from Saccharomyces cerevisiae (strain ATCC 204508 / S288c) (Baker's yeast).